Reading from the N-terminus, the 290-residue chain is Phosphoribulokinase 1 (290 aa).

12–20 (GSSGAGTST) contacts ATP.

This sequence belongs to the phosphoribulokinase family. As to quaternary structure, homooctamer.

It carries out the reaction D-ribulose 5-phosphate + ATP = D-ribulose 1,5-bisphosphate + ADP + H(+). It participates in carbohydrate biosynthesis; Calvin cycle. Its activity is regulated as follows. Activated by NADH and inhibited by phosphoenolpyruvate. In Cereibacter sphaeroides (Rhodobacter sphaeroides), this protein is Phosphoribulokinase 1 (prkA).